A 1189-amino-acid chain; its full sequence is Disabled homolog 2-interacting protein (1189 aa).

The segment at 1-75 (MSAGGNARKS…EPSASTPFRV (75 aa)) is disordered. Residues 20 to 38 (LLRRPRLQRQRSRSRSRTR) are compositionally biased toward basic residues. A compositionally biased stretch (basic and acidic residues) spans 39 to 49 (PARESPQERPG). Positions 59–73 (SEKNPSMEPSASTPF) are enriched in polar residues. Positions 101–202 (SFRHILPGFR…WMENLRRAVH (102 aa)) constitute a PH domain. A C2 domain is found at 193 to 311 (WMENLRRAVH…AGRQFVEKWY (119 aa)). Residues 387–595 (GKVKDFLTDL…TNMQRFLLEI (209 aa)) enclose the Ras-GAP domain. The segment at 646 to 943 (LRDVHTALST…RTPPTLLSTL (298 aa)) is necessary for interaction with AKT1. The segment covering 653 to 668 (LSTPGSGQLPGTNDLA) has biased composition (polar residues). 2 disordered regions span residues 653 to 679 (LSTPGSGQLPGTNDLASTPGSGSSSVS) and 715 to 738 (RSSGVQPSPARSSSYSEANEPDLQ). Residues 669 to 679 (STPGSGSSSVS) are compositionally biased toward low complexity. Over residues 715-731 (RSSGVQPSPARSSSYSE) the composition is skewed to polar residues. Residue S728 is modified to Phosphoserine; by MAP3K5 and RIPK1. Position 747 is a phosphoserine (S747). 5 disordered regions span residues 804–823 (VPTPTTPGTSEGAPGRPQLL), 843–865 (PRGLGDSGSEGHSSLSSHSNSEE), 895–998 (SLTE…SPNA), 1015–1034 (EDEGLGPDPPHRDRLRSKEE), and 1163–1189 (ARNGVSPTNPTKLQITENGEFRNSSNC). The segment covering 852–865 (EGHSSLSSHSNSEE) has biased composition (low complexity). Positions 919-931 (QPPPPPPPPPPAP) are enriched in pro residues. Polar residues-rich tracts occupy residues 939–955 (LLSTLQYPRPSSGTLAS) and 967–976 (LRQQSSSSKG). S978 and S995 each carry phosphoserine. Basic and acidic residues predominate over residues 1023–1034 (PPHRDRLRSKEE). A coiled-coil region spans residues 1025 to 1159 (HRDRLRSKEE…SALTQLKERY (135 aa)).

In terms of assembly, on plasma membrane, exists in an inactive form complexed with TNFR1; in response to TNF-alpha, dissociates from TNFR1 complex, translocates to cytoplasm and forms part of an intracellular signaling complex comprising TRADD, RIPK1, TRAF2 and MAP3K5. Interacts with DAB1. Part of a cytoplasmic complex made of HIPK1, DAB2IP and MAP3K5 in response to TNF-alpha; this complex formation promotes MAP3K5-JNK activation and subsequent apoptosis. Interacts (via N-terminal domain) with JAK2; the interaction occurs in a IFNG/IFN-gamma-dependent manner and inhibits JAK2 autophosphorylation activity. Interacts (via C2 domain) with GSK3B; the interaction stimulates GSK3B kinase activation. Interacts (via C2 domain) with PPP2CA. Interacts (via proline-rich motif) with a regulatory p85 subunit (via SH3 domain) of the PI3K complex; the interaction inhibits the PI3K-AKT complex activity in a TNF-alpha-dependent manner in prostate cancer (PCa) cells. Interacts with AKT1; the interaction is increased in a TNF-alpha-induced manner. Interacts (via C2 domain and active form preferentially) with KDR/VEGFR2 (tyrosine-phosphorylated active form preferentially); the interaction occurs at the late phase of VEGFA response and inhibits KDR/VEGFR2 activity. Interacts (via N-terminus C2 domain) with MAP3K5 ('Ser-966' dephosphorylated form preferentially); the interaction occurs in a TNF-alpha-induced manner. Interacts (via Ras-GAP domain) with the catalytic subunit of protein phosphatase PP2A; the interaction occurs in resting endothelial cells, is further enhanced by TNF-alpha stimulation and is required to bridge PP2A to MAP3K5. Interacts (via C-terminus PER domain) with TRAF2 (via zinc fingers); the interaction occurs in a TNF-alpha-dependent manner. Interacts with 14-3-3 proteins; the interaction occurs in a TNF-alpha-dependent manner. Interacts (via Ras-GAP domain) with RIPK1 (via kinase domain); the interaction occurs in a TNF-alpha-dependent manner. Interacts (via PH domain) with ERN1. Interacts with TRAF2. Interacts (via NPXY motif) with DAB2 (via PID domain). Interacts with RAB40C; acts as a GAP for RAB40C. Post-translationally, in response to TNF-alpha-induction, phosphorylated at Ser-728; phosphorylation leads to a conformational change, and thus, increases its association with 14-3-3 proteins, MAP3K5, RIPK1 and TRAF2 in endothelial cells; also stimulates regulatory p85 subunit sequestring and PI3K-p85 complex activity inhibition. In terms of tissue distribution, expressed in vascular endothelium of muscle and aorta, in smooth muscle cells of aorta and epithelial cells of lung. Expressed throughout the brain, including olfactory bulb, hypothalamus, cerebellum and cerebral cortex. Expressed in the soma and processes of neurons in a variety of brain structures, including the developing cerebral cortex, CA1 pyramidal neurons and Purkinje cells. Poorly expressed in medulloblastoma cells compared to cerebellar precursor proliferating progenitor cells (at protein level). Highly expressed in the brain, salivary gland, and testis; moderate expression in kidney and heart. Low expression in the lung, seminal vesicle, ventral prostate, epididymis, liver, and bladder. Very low expression in the coagulation gland and skeleton muscles. Lowest expression seen in spleen.

It localises to the cytoplasm. The protein resides in the cell membrane. The protein localises to the membrane. Its subcellular location is the cell projection. It is found in the dendrite. Functionally, functions as a scaffold protein implicated in the regulation of a large spectrum of both general and specialized signaling pathways. Involved in several processes such as innate immune response, inflammation and cell growth inhibition, apoptosis, cell survival, angiogenesis, cell migration and maturation. Also plays a role in cell cycle checkpoint control; reduces G1 phase cyclin levels resulting in G0/G1 cell cycle arrest. Mediates signal transduction by receptor-mediated inflammatory signals, such as the tumor necrosis factor (TNF), interferon (IFN) or lipopolysaccharide (LPS). Modulates the balance between phosphatidylinositol 3-kinase (PI3K)-AKT-mediated cell survival and apoptosis stimulated kinase (MAP3K5)-JNK signaling pathways; sequesters both AKT1 and MAP3K5 and counterbalances the activity of each kinase by modulating their phosphorylation status in response to pro-inflammatory stimuli. Acts as a regulator of the endoplasmic reticulum (ER) unfolded protein response (UPR) pathway; specifically involved in transduction of the ER stress-response to the JNK cascade through ERN1. Mediates TNF-alpha-induced apoptosis activation by facilitating dissociation of inhibitor 14-3-3 from MAP3K5; recruits the PP2A phosphatase complex which dephosphorylates MAP3K5 on 'Ser-966', leading to the dissociation of 13-3-3 proteins and activation of the MAP3K5-JNK signaling pathway in endothelial cells. Also mediates TNF/TRAF2-induced MAP3K5-JNK activation, while it inhibits CHUK-NF-kappa-B signaling. Acts a negative regulator in the IFN-gamma-mediated JAK-STAT signaling cascade by inhibiting smooth muscle cell (VSMCs) proliferation and intimal expansion, and thus, prevents graft arteriosclerosis (GA). Acts as a GTPase-activating protein (GAP) for the ADP ribosylation factor 6 (ARF6) and Ras. Promotes hydrolysis of the ARF6-bound GTP and thus, negatively regulates phosphatidylinositol 4,5-bisphosphate (PIP2)-dependent TLR4-TIRAP-MyD88 and NF-kappa-B signaling pathways in endothelial cells in response to lipopolysaccharides (LPS). Binds specifically to phosphatidylinositol 4-phosphate (PtdIns4P) and phosphatidylinositol 3-phosphate (PtdIns3P). In response to vascular endothelial growth factor (VEGFA), acts as a negative regulator of the VEGFR2-PI3K-mediated angiogenic signaling pathway by inhibiting endothelial cell migration and tube formation. In the developing brain, promotes both the transition from the multipolar to the bipolar stage and the radial migration of cortical neurons from the ventricular zone toward the superficial layer of the neocortex in a glial-dependent locomotion process. Probable downstream effector of the Reelin signaling pathway; promotes Purkinje cell (PC) dendrites development and formation of cerebellar synapses. Also functions as a tumor suppressor protein in prostate cancer progression; prevents cell proliferation and epithelial-to-mesenchymal transition (EMT) through activation of the glycogen synthase kinase-3 beta (GSK3B)-induced beta-catenin and inhibition of PI3K-AKT and Ras-MAPK survival downstream signaling cascades, respectively. In Mus musculus (Mouse), this protein is Disabled homolog 2-interacting protein (Dab2ip).